A 567-amino-acid polypeptide reads, in one-letter code: Urease subunit alpha (567 aa).

The Urease domain occupies 129–567 (GGIDAHIHFI…LPLAQLYCLF (439 aa)). The Ni(2+) site is built by histidine 134, histidine 136, and lysine 217. An N6-carboxylysine modification is found at lysine 217. Residue histidine 219 participates in substrate binding. Ni(2+) is bound by residues histidine 246 and histidine 272. Catalysis depends on histidine 320, which acts as the Proton donor. Residue aspartate 360 coordinates Ni(2+).

Belongs to the metallo-dependent hydrolases superfamily. Urease alpha subunit family. As to quaternary structure, heterotrimer of UreA (gamma), UreB (beta) and UreC (alpha) subunits. Three heterotrimers associate to form the active enzyme. Ni cation serves as cofactor. In terms of processing, carboxylation allows a single lysine to coordinate two nickel ions.

The protein resides in the cytoplasm. The enzyme catalyses urea + 2 H2O + H(+) = hydrogencarbonate + 2 NH4(+). It participates in nitrogen metabolism; urea degradation; CO(2) and NH(3) from urea (urease route): step 1/1. This Alteromonas mediterranea (strain DSM 17117 / CIP 110805 / LMG 28347 / Deep ecotype) protein is Urease subunit alpha.